The sequence spans 594 residues: MTLDKLRKKYIDFFKSKKHFEIMGKSLVPENDPTVLFNTAGMQPLIPYLLGEVHPSGDMLVNVQKCLRTGDIDEVGDLSHLTFFEMLGNWSLGAYFKEYSVKCSFEFLTSSEYLNIPKDRLYVSVFEGDQEIPRDTETAKVWESLGIPKDRIYYLSKDHNFWGPVGSKGPCGPDTEIYVDTGKIKCSINCNVTCSCGKYFEIWNNVFMQYNKDENGNYMELDRKCVDTGMGLERTIAFLQGKSSVYDTDAFMPIIKRIEFISGKIYGQKEDDDRCIRIISDHIKAACFILADSSGVFPSNLGQGYVLRRLIRRSIRYAKKLGIKSHFLADLVDSVETIYRSFYNELTEKKDFIKKELSTEEEKFFKTLFQGEQEFIKITRNLSSKTIPGDIAFKLYDTYGFPYELTEELAFEYGFDIDKSGFNEYFKKHQKTSKKGGDKVFKGGLADYTYETTKLHTATHLLHKALQLVLGDHVKQKGSNITAERLRFDFVHSKKMTDDEIKKVEDIVNLQIKNSLSVKKSIMELSEAREKGAMALFGEKYDNLVSVYEIDGFSLEVCGGPHVENTNELGTFKIQKEQSSSSGIRRIKAILIDE.

Zn(2+) is bound by residues histidine 456, histidine 460, cysteine 558, and histidine 562.

Belongs to the class-II aminoacyl-tRNA synthetase family. Requires Zn(2+) as cofactor.

The protein resides in the cytoplasm. The catalysed reaction is tRNA(Ala) + L-alanine + ATP = L-alanyl-tRNA(Ala) + AMP + diphosphate. Functionally, catalyzes the attachment of alanine to tRNA(Ala) in a two-step reaction: alanine is first activated by ATP to form Ala-AMP and then transferred to the acceptor end of tRNA(Ala). Also edits incorrectly charged Ser-tRNA(Ala) and Gly-tRNA(Ala) via its editing domain. The protein is Alanine--tRNA ligase (alaS) of Borreliella afzelii (strain PKo) (Borrelia afzelii).